The primary structure comprises 495 residues: Histidine--tRNA ligase (495 aa).

This sequence belongs to the class-II aminoacyl-tRNA synthetase family. Homodimer.

It is found in the cytoplasm. The enzyme catalyses tRNA(His) + L-histidine + ATP = L-histidyl-tRNA(His) + AMP + diphosphate + H(+). This Ruegeria pomeroyi (strain ATCC 700808 / DSM 15171 / DSS-3) (Silicibacter pomeroyi) protein is Histidine--tRNA ligase.